The primary structure comprises 252 residues: Reaction center protein L chain (252 aa).

A run of 3 helical transmembrane segments spans residues Phe8 to Leu30, Gly58 to Leu86, and His91 to Leu113. (7R,8Z)-bacteriochlorophyll b-binding residues include His128 and His148. The helical transmembrane segment at Pro146–Ile173 threads the bilayer. Fe cation is bound at residue His165. A ubiquinone is bound at residue Phe191. Residues Gly200–Leu225 traverse the membrane as a helical segment. His205 contributes to the Fe cation binding site.

This sequence belongs to the reaction center PufL/M/PsbA/D family. In terms of assembly, reaction center is composed of four bacteriochlorophylls, two bacteriopheophytins, two ubiquinones, one iron, and two highly hydrophobic polypeptide chains (designated L and M).

Its subcellular location is the cell inner membrane. The reaction center is a membrane-bound complex that mediates the initial photochemical event in the electron transfer process of photosynthesis. In Acidiphilium cryptum, this protein is Reaction center protein L chain (pufL).